The following is a 609-amino-acid chain: Glutamine--fructose-6-phosphate aminotransferase [isomerizing] (609 aa).

Cys2 (nucleophile; for GATase activity) is an active-site residue. Residues 2–218 (CGIVGAVAQR…EGDVVEVTRR (217 aa)) form the Glutamine amidotransferase type-2 domain. SIS domains are found at residues 286-426 (ADAL…LKGA) and 458-599 (LAEG…VDQP). Residue Lys604 is the For Fru-6P isomerization activity of the active site.

In terms of assembly, homodimer.

It localises to the cytoplasm. It catalyses the reaction D-fructose 6-phosphate + L-glutamine = D-glucosamine 6-phosphate + L-glutamate. Functionally, catalyzes the first step in hexosamine metabolism, converting fructose-6P into glucosamine-6P using glutamine as a nitrogen source. The protein is Glutamine--fructose-6-phosphate aminotransferase [isomerizing] of Yersinia pestis.